We begin with the raw amino-acid sequence, 654 residues long: Coiled-coil domain-containing protein 81 (654 aa).

Positions 196–270 (SRESYRKRPN…RERQSISPAK (75 aa)) are disordered. S206 is modified (phosphoserine). Composition is skewed to basic and acidic residues over residues 212 to 222 (RIEHKETENKT) and 232 to 251 (GENR…EGGA). Residues S273, S275, S296, and S419 each carry the phosphoserine modification. Residues 293-302 (ENLSSPGCQR) show a composition bias toward polar residues. The segment at 293–318 (ENLSSPGCQRNDNERPRTSPAPACQD) is disordered. Residues 431-562 (SQSLLKQMES…QRRDLQMLQR (132 aa)) adopt a coiled-coil conformation.

The protein resides in the cytoplasm. It is found in the cytoskeleton. The protein localises to the microtubule organizing center. It localises to the centrosome. This Mus musculus (Mouse) protein is Coiled-coil domain-containing protein 81 (Ccdc81).